The sequence spans 131 residues: Global transcriptional regulator Spx 1 (131 aa).

Cys-10 and Cys-13 are oxidised to a cystine.

This sequence belongs to the ArsC family. Spx subfamily. Interacts with the C-terminal domain of the alpha subunit of the RNAP.

It localises to the cytoplasm. Global transcriptional regulator that plays a key role in stress response and exerts either positive or negative regulation of genes. Acts by interacting with the C-terminal domain of the alpha subunit of the RNA polymerase (RNAP). This interaction can enhance binding of RNAP to the promoter region of target genes and stimulate their transcription, or block interaction of RNAP with activator. The protein is Global transcriptional regulator Spx 1 of Oceanobacillus iheyensis (strain DSM 14371 / CIP 107618 / JCM 11309 / KCTC 3954 / HTE831).